The following is a 196-amino-acid chain: Holliday junction branch migration complex subunit RuvA (196 aa).

The domain I stretch occupies residues 1 to 63 (MYDYIKGILT…EDAHLLYGFA (63 aa)). Residues 64–142 (TENEKSVFLS…MSEEAGPVQQ (79 aa)) form a domain II region. Residues 142 to 146 (QVAPS) form a flexible linker region. A domain III region spans residues 147 to 196 (SENIALEEAMEAMEALGYRPAELKKIKKFFEGTNDTAENYIKSALKMLMK).

Belongs to the RuvA family. Homotetramer. Forms an RuvA(8)-RuvB(12)-Holliday junction (HJ) complex. HJ DNA is sandwiched between 2 RuvA tetramers; dsDNA enters through RuvA and exits via RuvB. An RuvB hexamer assembles on each DNA strand where it exits the tetramer. Each RuvB hexamer is contacted by two RuvA subunits (via domain III) on 2 adjacent RuvB subunits; this complex drives branch migration. In the full resolvosome a probable DNA-RuvA(4)-RuvB(12)-RuvC(2) complex forms which resolves the HJ.

It is found in the cytoplasm. Its function is as follows. The RuvA-RuvB-RuvC complex processes Holliday junction (HJ) DNA during genetic recombination and DNA repair, while the RuvA-RuvB complex plays an important role in the rescue of blocked DNA replication forks via replication fork reversal (RFR). RuvA specifically binds to HJ cruciform DNA, conferring on it an open structure. The RuvB hexamer acts as an ATP-dependent pump, pulling dsDNA into and through the RuvAB complex. HJ branch migration allows RuvC to scan DNA until it finds its consensus sequence, where it cleaves and resolves the cruciform DNA. In Streptococcus suis (strain 98HAH33), this protein is Holliday junction branch migration complex subunit RuvA.